Reading from the N-terminus, the 76-residue chain is UPF0248 protein MMP0286 (76 aa).

The protein belongs to the UPF0248 family.

The chain is UPF0248 protein MMP0286 from Methanococcus maripaludis (strain DSM 14266 / JCM 13030 / NBRC 101832 / S2 / LL).